A 462-amino-acid polypeptide reads, in one-letter code: Probable acid phosphatase SPBC4.06 (462 aa).

The Nucleophile role is filled by histidine 35. The active-site Proton donor is the aspartate 330.

This sequence belongs to the histidine acid phosphatase family.

The protein localises to the mitochondrion. The catalysed reaction is a phosphate monoester + H2O = an alcohol + phosphate. This is Probable acid phosphatase SPBC4.06 from Schizosaccharomyces pombe (strain 972 / ATCC 24843) (Fission yeast).